Here is a 327-residue protein sequence, read N- to C-terminus: Gamma-resorcylate decarboxylase (327 aa).

Zn(2+)-binding residues include Glu-8 and His-10. Phe-23, His-164, and Asp-287 together coordinate 2,6-dihydroxybenzoate. Zn(2+) is bound by residues His-164 and Asp-287. Residue Asp-287 is part of the active site.

Belongs to the metallo-dependent hydrolases superfamily. ACMSD family. As to quaternary structure, homotetramer. Dimer of dimers. The cofactor is Zn(2+).

It carries out the reaction 2,6-dihydroxybenzoate + H(+) = resorcinol + CO2. The enzyme catalyses 2,3-dihydroxybenzoate + H(+) = catechol + CO2. It participates in aromatic compound metabolism. With respect to regulation, inhibited by CuCl(2), monoiodoacetate and diethylpyrocarbonate. Inhibited by 2,3-dihydroxybenzaldehyde, which is an analog of the substrate 2,3-dihydroxybenzoate. In terms of biological role, involved in the gamma-resorcylate (2,6-dihydroxybenzoate) catabolism. Catalyzes the reversible decarboxylation of gamma-resorcylate to resorcinol. The reaction is reversible, but equilibrium greatly favors the decarboxylation reaction. Also catalyzes the decarboxylation of 2,3-dihydroxybenzoate to catechol, but does not act on 2,4-dihydroxybenzoate, 2,5-dihydroxybenzoate, 3,4-dihydroxybenzoate, 3,5-dihydroxybenzoate, 2-hydroxybenzoate, or 3-hydroxybenzoate. Only resorcinol is carboxylated by the reverse reaction. The protein is Gamma-resorcylate decarboxylase of Rhizobium sp. (strain MTP-10005).